A 262-amino-acid chain; its full sequence is MNLSVAPKEIAGHGLLDGKVVVVTAAAGTGIGSATARRALAEGADVVISDHHERRLGETAAELSALGLGRVEHVVCDVTSTAQVDALIDSTTARMGRLDVLVNNAGLGGQTPVADMTDDEWDRVLDVSLTSVFRATRAALRYFRDAPHGGVIVNNASVLGWRAQHSQSHYAAAKAGVMALTRCSAIEAAEYGVRINAVSPSIARHKFLDKTASAELLDRLAAGEAFGRAAEPWEVAATIAFLASDYSSYLTGEVISVSCQHP.

Residues D50, D77, V78, N104, Y170, K174, and A203 each contribute to the NAD(+) site. Residue Y170 is the Proton acceptor of the active site.

Belongs to the short-chain dehydrogenases/reductases (SDR) family.

The catalysed reaction is (5R,7aS)-5-hydroxy-7a-methyl-1-oxo-2,3,5,6,7,7a-hexahydro-1H-indene-carboxyl-CoA + NAD(+) = (7aS)-7a-methyl-1,5-dioxo-2,3,5,6,7,7a-hexahydro-1H-indene-carboxyl-CoA + NADH + H(+). It functions in the pathway steroid metabolism; cholesterol degradation. Requires the presence of IpdC. Its function is as follows. Involved in the final steps of cholesterol and steroid degradation. Probably catalyzes the oxidation of the 5-OH group of (5R,7aS)-5-hydroxy-7a-methyl-1-oxo-2,3,5,6,7,7a-hexahydro-1H-indene-carboxyl-CoA, leading to the formation of HIEC-CoA. The chain is (5R,7aS)-5-hydroxy-7a-methyl-1-oxo-2,3,5,6,7,7a-hexahydro-1H-indene-carboxyl-CoA reductase from Mycobacterium tuberculosis (strain ATCC 25618 / H37Rv).